Reading from the N-terminus, the 1134-residue chain is MGIWKWLVMASLVWPVLTLRNVYDMKIECPHTVSFGENSVIGYVELPPMPLADTAQLVPESSCSMDNHQSLNTITKYTQVSWRGKADQSQSSQNSFETVSTEVDLKGTCVLKHKMVEESYRSRKSITCYDLSCNSTYCKPTLYMIVPIHACNMMKSCLIALGPYRVQVVYERTYCMTGVLIEGKCFVPDQSVVSIIKHGIFDIASVHIVCFFVAVKGNTYKIFEQVKKSFESTCNDTENKVQGYYICIVGGNSAPIYVPTLDDFRSMEAFTGIFRSPHGEDHDLAGEETATYSIVGPANAKVPHSASSDTLSLIAFSGIPSYSSLSILTSSTEAKHVFSPGLFPKLNHTNCDKGAIPLMWTGMIDVPRYYDGIHPFTVFCVLSGPGASCEAFSEGGIFNITSPMCLVSKQNRFRLTEQQVNFVCQRVDVDIVVYCNGQRKVILTKTLVIGQCIYTITSLFSLLPGVAHSIAVELCVPGFHGWATAALLVTFCFGWVLIPAVTFIILAILKFIANIFHTSNQENRLKSVLRKIKEEFEKTKGSMVCDVCKYECETYKELKAHGVSCPQSQCPYCFTHCEPTEAAFQAHYKVCQVTHRFRDDLKKTVTPQNFTPGCYRTLNLFRYKSRCYIFTMWIFLLVLESILWAASASETPLTPVWNDNAHGVGSIPMHTDLELDFSLTSSSKYTYRRKLTNPLEAQSIDLHIEIEEQTIGVDVHALGHWFDGRLNLKTSFHCYGACTKYEYPWHTAKCHYERDYQYETSWGCNPSDCPGCGTGCTACGLYLDRLKPVGSAYKIITIRYSRRVCVQFGEENLCKIIDMNDCFVSRHVKVCIIGTVSKFSQGDTLLFFGPLEGGGLIFKHWRTSTCQFGDPGDIMSPRDKGFLCPEFPGSFRKKCNFATTPICEYDGNMVSGYKKVMATIDSFQSFNTSTMHFTDERIEWKDPDGMLRDHINILVTKDIDFDNLGENPCKIGLQTSSIEGAWGSGVGFTLTCLVSLTECPTFLTSIKACDKAICYGAESVTLTRGQNTVKVSGKGGHSGSTFKCCHGEDCSPNGLHAAAPHLDKVNGISEIENSKEYDDGAPQCGIKCWFVKSGEWISGIFSGNWIVLIVLCVFLLFSLVLLSILCPVRKHKKS.

The N-terminal stretch at 1-18 (MGIWKWLVMASLVWPVLT) is a signal peptide. Residues 19–487 (LRNVYDMKIE…GFHGWATAAL (469 aa)) are Lumenal-facing. Disulfide bonds link Cys-29–Cys-151, Cys-63–Cys-157, Cys-109–Cys-128, Cys-133–Cys-138, Cys-175–Cys-185, Cys-210–Cys-247, Cys-234–Cys-351, and Cys-380–Cys-389. The N-linked (GlcNAc...) asparagine; by host glycan is linked to Asn-134. N-linked (GlcNAc...) asparagine; by host glycans are attached at residues Asn-235 and Asn-347. A glycan (N-linked (GlcNAc...) asparagine; by host) is linked at Asn-399. 2 cysteine pairs are disulfide-bonded: Cys-405/Cys-424 and Cys-452/Cys-475. Residues 488–508 (LVTFCFGWVLIPAVTFIILAI) traverse the membrane as a helical segment. The Cytoplasmic portion of the chain corresponds to 509–627 (LKFIANIFHT…LNLFRYKSRC (119 aa)). The interval 516-533 (FHTSNQENRLKSVLRKIK) is binding to the ribonucleoprotein. 2 consecutive CCHC-type zinc fingers follow at residues 545–565 (CDVC…GVSC) and 570–591 (CPYC…YKVC). Binding to the ribonucleoprotein stretches follow at residues 588–605 (YKVC…KKTV), 592–603 (QVTHRFRDDLKK), and 611–625 (TPGC…RYKS). The 24-residue stretch at 611–634 (TPGCYRTLNLFRYKSRCYIFTMWI) folds into the ITAM domain. Positions 615–618 (YRTL) match the YxxL motif. The chain crosses the membrane as a helical span at residues 628–648 (YIFTMWIFLLVLESILWAASA). Residues 649–1104 (SETPLTPVWN…EWISGIFSGN (456 aa)) lie on the Lumenal side of the membrane. 7 disulfides stabilise this stretch: Cys-734-Cys-769, Cys-738-Cys-776, Cys-750-Cys-884, Cys-764-Cys-895, Cys-779-Cys-903, Cys-805-Cys-814, and Cys-822-Cys-831. Residues 756–776 (YQYETSWGCNPSDCPGCGTGC) form a fusion loop region. Asn-927 carries an N-linked (GlcNAc...) asparagine; by host glycan. 5 cysteine pairs are disulfide-bonded: Cys-969–Cys-999, Cys-992–Cys-1044, Cys-1009–Cys-1014, Cys-1045–Cys-1050, and Cys-1084–Cys-1088. The chain crosses the membrane as a helical span at residues 1105-1125 (WIVLIVLCVFLLFSLVLLSIL). Residues 1121 to 1134 (LLSILCPVRKHKKS) are binding to the ribonucleoprotein. Topologically, residues 1126–1134 (CPVRKHKKS) are cytoplasmic.

The protein belongs to the hantavirus envelope glycoprotein family. In terms of assembly, homodimer. Homotetramer; forms heterotetrameric Gn-Gc spikes in the pre-fusion conformation. Interacts (via C-terminus) with the nucleoprotein. Interacts with host TUFM; this interaction contributes to the virus-induced degradation of mitochondria by autophagy, which leads to degradation of host MAVS and inhibition of type I interferon (IFN) responses. Interacts with host MAP1LC3B; this interaction contributes to the virus-induced degradation of mitochondria by autophagy, which leads to degradation of host MAVS and inhibition of type I interferon (IFN) responses. Homodimer. Homotetramer; forms heterotetrameric Gn-Gc spikes in the pre-fusion conformation. Homotrimer; forms homotrimer in the post-fusion conformation at acidic pH. Interacts (via C-terminus) with the nucleoprotein. Envelope polyprotein precursor is quickly cleaved in vivo just after synthesis, presumably by host signal peptidase.

The protein localises to the virion membrane. Its subcellular location is the host cell surface. The protein resides in the host Golgi apparatus membrane. It is found in the host endoplasmic reticulum membrane. It localises to the host mitochondrion. Forms homotetramers with glycoprotein C at the surface of the virion. Attaches the virion to host cell receptors including integrin ITGAV/ITGB3. This attachment induces virion internalization predominantly through clathrin-dependent endocytosis. May also bind to host C1QBP for virus entry into the host cell. Mediates the assembly and budding of infectious virus particles through its interaction with the nucleocapsid protein and the viral genome. May dysregulate normal immune and endothelial cell responses through an ITAM motif. Translocates to mitochondria, binds to host TUFM and recruits MAP1LC3B. These interactions induce mitochondrial autophagy and therefore destruction of host MAVS leading to inhibition of type I interferon (IFN) responses. Concomitant breakdown of glycoprotein N is apparently prevented by the nucleoprotein that may inhibit Gn-stimulated autophagosome-lysosome fusion. Interacts with the viral genomic RNA. Functionally, forms homotetramers with glycoprotein N at the surface of the virion. Attaches the virion to host cell receptors including integrin ITGAV/ITGB3. This attachment induces virion internalization predominantly through clathrin-dependent endocytosis. May also bind to host C1QBP for virus entry into the host cell. Class II fusion protein that promotes fusion of viral membrane with host endosomal membrane after endocytosis of the virion. The sequence is that of Envelopment polyprotein (GP) from Apodemus agrarius (Eurasian field mouse).